The sequence spans 343 residues: Anthranilate phosphoribosyltransferase (343 aa).

5-phospho-alpha-D-ribose 1-diphosphate is bound by residues G84, 87 to 88 (GD), T92, 94 to 97 (NIST), 112 to 120 (KHGNRSVSS), and S124. G84 provides a ligand contact to anthranilate. S96 is a Mg(2+) binding site. N115 serves as a coordination point for anthranilate. R170 contacts anthranilate. 2 residues coordinate Mg(2+): D229 and E230.

This sequence belongs to the anthranilate phosphoribosyltransferase family. Homodimer. It depends on Mg(2+) as a cofactor.

It carries out the reaction N-(5-phospho-beta-D-ribosyl)anthranilate + diphosphate = 5-phospho-alpha-D-ribose 1-diphosphate + anthranilate. It functions in the pathway amino-acid biosynthesis; L-tryptophan biosynthesis; L-tryptophan from chorismate: step 2/5. Functionally, catalyzes the transfer of the phosphoribosyl group of 5-phosphorylribose-1-pyrophosphate (PRPP) to anthranilate to yield N-(5'-phosphoribosyl)-anthranilate (PRA). The sequence is that of Anthranilate phosphoribosyltransferase from Stenotrophomonas maltophilia (strain R551-3).